The chain runs to 89 residues: Small ribosomal subunit protein uS15 (89 aa).

The protein belongs to the universal ribosomal protein uS15 family. Part of the 30S ribosomal subunit. Forms a bridge to the 50S subunit in the 70S ribosome, contacting the 23S rRNA.

In terms of biological role, one of the primary rRNA binding proteins, it binds directly to 16S rRNA where it helps nucleate assembly of the platform of the 30S subunit by binding and bridging several RNA helices of the 16S rRNA. Its function is as follows. Forms an intersubunit bridge (bridge B4) with the 23S rRNA of the 50S subunit in the ribosome. The protein is Small ribosomal subunit protein uS15 of Paracoccus denitrificans (strain Pd 1222).